Here is a 345-residue protein sequence, read N- to C-terminus: Meiotic recombination protein rec12 (345 aa).

In terms of domain architecture, Topo IIA-type catalytic spans 5 to 137 (DKKKVVRSWI…LNVEASAKGL (133 aa)). The active-site O-(5'-phospho-DNA)-tyrosine intermediate is the Y98. 2 residues coordinate Mg(2+): E179 and D229.

It belongs to the TOP6A family. Component of the DSB catalytic core (DSBC) complex, composed of at least rec12, rec6 and rec14. The complex interacts with mde2. Requires Mg(2+) as cofactor.

The protein resides in the cytoplasm. It localises to the nucleus. It catalyses the reaction ATP-dependent breakage, passage and rejoining of double-stranded DNA.. In terms of biological role, required for formation of the double-strand breaks (DSBs) that initiate meiotic recombination. Required for crossover recombination and chiasmatic segregation of chromosomes during meiosis I. Also involved in the faithful equational segregation of chromosomes during meiosis II. This chain is Meiotic recombination protein rec12, found in Schizosaccharomyces pombe (strain 972 / ATCC 24843) (Fission yeast).